The primary structure comprises 414 residues: MSIVEMGKNAKQAAKELAQANTELKNNVLHELEKSLLDNAEYILQQNQKDLDNAKKNNLSKAFVDRLTLTPARIESMAQGVRQIADFADPIGKIEKGFKHPKGMTISQIRVPLGVIAMIFESRPNVTIDAGALALKSGNAIILRGGSDALHTNIALKNIFQEVCEKHGLSKNIVQLVEDIARERVTELVTLDKYIDVIIPRGGKSLKKAIQQQATISMIETGAGICHTYIDEFADLDKAIKIVINAKTQRPGVCNALESLLVHQNIAEKFLPKLEIELAKYNVELRADNESLKYLGNAILATPEDWDTEYLDLVLSIKTVANINEAIEHINTHGSMHSECIVTESYTNTEIFLNEVDAAAVYANASTRFTDGSEFGFGGEIGISTQKLHARGPMGINELTTLKYIIRGNGQVRG.

The protein belongs to the gamma-glutamyl phosphate reductase family.

It localises to the cytoplasm. The enzyme catalyses L-glutamate 5-semialdehyde + phosphate + NADP(+) = L-glutamyl 5-phosphate + NADPH + H(+). It participates in amino-acid biosynthesis; L-proline biosynthesis; L-glutamate 5-semialdehyde from L-glutamate: step 2/2. In terms of biological role, catalyzes the NADPH-dependent reduction of L-glutamate 5-phosphate into L-glutamate 5-semialdehyde and phosphate. The product spontaneously undergoes cyclization to form 1-pyrroline-5-carboxylate. In Francisella philomiragia subsp. philomiragia (strain ATCC 25017 / CCUG 19701 / FSC 153 / O#319-036), this protein is Gamma-glutamyl phosphate reductase.